We begin with the raw amino-acid sequence, 386 residues long: Bifunctional enzyme IspD/IspF (386 aa).

The interval 1–229 (MIRGERVIGI…RARALLEAPV (229 aa)) is 2-C-methyl-D-erythritol 4-phosphate cytidylyltransferase. A 2-C-methyl-D-erythritol 2,4-cyclodiphosphate synthase region spans residues 230–386 (ATGVGYDTHR…AIALLVRAAG (157 aa)). A divalent metal cation-binding residues include Asp-236 and His-238. 4-CDP-2-C-methyl-D-erythritol 2-phosphate contacts are provided by residues 236 to 238 (DTH) and 261 to 262 (HS). His-269 lines the a divalent metal cation pocket. Residues 283–285 (DLG), 288–292 (FPDTD), 359–362 (TTGE), Phe-366, and Arg-369 contribute to the 4-CDP-2-C-methyl-D-erythritol 2-phosphate site.

In the N-terminal section; belongs to the IspD/TarI cytidylyltransferase family. IspD subfamily. This sequence in the C-terminal section; belongs to the IspF family. It depends on a divalent metal cation as a cofactor.

The enzyme catalyses 2-C-methyl-D-erythritol 4-phosphate + CTP + H(+) = 4-CDP-2-C-methyl-D-erythritol + diphosphate. It carries out the reaction 4-CDP-2-C-methyl-D-erythritol 2-phosphate = 2-C-methyl-D-erythritol 2,4-cyclic diphosphate + CMP. The protein operates within isoprenoid biosynthesis; isopentenyl diphosphate biosynthesis via DXP pathway; isopentenyl diphosphate from 1-deoxy-D-xylulose 5-phosphate: step 2/6. It participates in isoprenoid biosynthesis; isopentenyl diphosphate biosynthesis via DXP pathway; isopentenyl diphosphate from 1-deoxy-D-xylulose 5-phosphate: step 4/6. Functionally, bifunctional enzyme that catalyzes the formation of 4-diphosphocytidyl-2-C-methyl-D-erythritol from CTP and 2-C-methyl-D-erythritol 4-phosphate (MEP) (IspD), and catalyzes the conversion of 4-diphosphocytidyl-2-C-methyl-D-erythritol 2-phosphate (CDP-ME2P) to 2-C-methyl-D-erythritol 2,4-cyclodiphosphate (ME-CPP) with a corresponding release of cytidine 5-monophosphate (CMP) (IspF). The sequence is that of Bifunctional enzyme IspD/IspF from Anaeromyxobacter dehalogenans (strain 2CP-C).